Consider the following 238-residue polypeptide: Isoprene-epoxide--glutathione S-transferase (238 aa).

The 76-residue stretch at Tyr7–Leu82 folds into the GST N-terminal domain. The region spanning Asp118–Ile238 is the GST C-terminal domain.

This sequence belongs to the GST superfamily. As to quaternary structure, homodimer.

The enzyme catalyses 2-glutathionyl-2-methylbut-3-en-1-ol = (3R)-3,4-epoxy-3-methylbut-1-ene + glutathione. Activity is inhibited by 1,2-epoxyhexane. Functionally, involved in isoprene degradation. Catalyzes the glutathione-dependent ring opening of various epoxides. The highest conversion rate is observed with the physiological substrate, 3,4-epoxy-3-methyl-1-butene, which is the primary oxidation product of isoprene. It can also use other epoxides, including epoxyethane, epoxypropane, epithiopropane, epichlorohydrin, epifluorohydrin, epibromohydrin, 1,2-epoxybutane, 1,2-epoxyhexane, cis-2,3-epoxybutane, cis-1,2-dichloroepoxyethane and trans-1,2-dichloroepoxyethane. The protein is Isoprene-epoxide--glutathione S-transferase of Rhodococcus sp. (strain AD45).